The chain runs to 504 residues: Glucose-6-phosphate isomerase (504 aa).

E333 functions as the Proton donor in the catalytic mechanism. Active-site residues include H364 and K473.

The protein belongs to the GPI family.

The protein localises to the cytoplasm. It catalyses the reaction alpha-D-glucose 6-phosphate = beta-D-fructose 6-phosphate. The protein operates within carbohydrate biosynthesis; gluconeogenesis. It participates in carbohydrate degradation; glycolysis; D-glyceraldehyde 3-phosphate and glycerone phosphate from D-glucose: step 2/4. Catalyzes the reversible isomerization of glucose-6-phosphate to fructose-6-phosphate. This chain is Glucose-6-phosphate isomerase, found in Xanthomonas campestris pv. campestris (strain B100).